The sequence spans 228 residues: Cutinase CUT1 (228 aa).

The signal sequence occupies residues 1–16 (MQFITVALTLIALASA). The cysteines at positions 49 and 127 are disulfide-linked. S138 (nucleophile) is an active-site residue. A disulfide bond links C189 and C196. The N-linked (GlcNAc...) asparagine glycan is linked to N190. Residue D193 is part of the active site. The Proton donor/acceptor role is filled by H206.

This sequence belongs to the cutinase family. Post-translationally, the 2 disulfide bonds play a critical role in holding the catalytic residues in juxta-position; reduction of the disulfide bridges results in the complete inactivation of the enzyme.

The protein resides in the secreted. It catalyses the reaction cutin + H2O = cutin monomers.. Its function is as follows. Catalyzes the hydrolysis of complex carboxylic polyesters found in the cell wall of plants. Degrades cutin, a macromolecule that forms the structure of the plant cuticle. Required for efficient penetration of the host plant cuticle by the appressorium during the initial stage of fungal infection. This is Cutinase CUT1 from Pyricularia oryzae (strain 70-15 / ATCC MYA-4617 / FGSC 8958) (Rice blast fungus).